Here is a 162-residue protein sequence, read N- to C-terminus: Protein archease (162 aa).

Ca(2+) is bound by residues Asp34, Asp161, and Ile162.

The protein belongs to the archease family. As to quaternary structure, component of the tRNA-splicing ligase complex.

Functionally, component of the tRNA-splicing ligase complex required to facilitate the enzymatic turnover of catalytic subunit RTCB. Together with ddx1, acts by facilitating the guanylylation of RTCB, a key intermediate step in tRNA ligation. The chain is Protein archease from Ictalurus punctatus (Channel catfish).